A 436-amino-acid chain; its full sequence is Homeobox protein PKNOX1 (436 aa).

The segment at 24–49 (LKTEQDPNCSEPDVEGVSPPPVGSQT) is disordered. Residues Ser33 and Ser41 each carry the phosphoserine modification. An MEIS N-terminal domain is found at 80–163 (GSEGTTSASF…MNSETLLSGE (84 aa)). Residues 259–321 (SKNKRGVLPK…NARRRILQPM (63 aa)) constitute a DNA-binding region (homeobox; TALE-type). The segment at 401 to 436 (AEQSEDDSVDSTGDGGAALAPGHLGGLVLENSDSLQ) is disordered.

Belongs to the TALE/MEIS homeobox family. In terms of assembly, interacts with MN1.

The protein resides in the nucleus. Activates transcription in the presence of PBX1A and HOXA1. The sequence is that of Homeobox protein PKNOX1 from Bos taurus (Bovine).